The sequence spans 959 residues: Probable transport protein MmpL4 (959 aa).

11 helical membrane passes run 25–45, 205–225, 239–259, 300–320, 333–353, 381–401, 766–786, 790–810, 818–838, 872–892, and 902–922; these read FAVPIILVWLAIAVTVSVFIP, VIVILVTLLLVYRSFITVILL, VVALLGHTGLIGLSTFAVNLL, FHVILGSGLTISGATFCLSFA, AVGMLIAVAVALTLGPAVLTV, WPLPILITTCAIAMVGLLALP, WDLVIAGISSLCLIFIIMLII, FVAAAVIVGTVALSLGASFGL, ILGIELHYLVLAMSVIVLLAV, VVTNAGLVFAFTMASMVVSDL, and IGLGLLFDTLIVRSFMMPSIA.

The protein belongs to the resistance-nodulation-cell division (RND) (TC 2.A.6) family. MmpL subfamily.

It localises to the cell membrane. In Mycobacterium leprae (strain TN), this protein is Probable transport protein MmpL4 (mmpL4).